Here is a 257-residue protein sequence, read N- to C-terminus: 4-diphosphocytidyl-2-C-methyl-D-erythritol kinase (257 aa).

Residue Lys-8 is part of the active site. 91–101 (PMGGGLGGGSA) is a binding site for ATP. Asp-131 is a catalytic residue.

Belongs to the GHMP kinase family. IspE subfamily.

The catalysed reaction is 4-CDP-2-C-methyl-D-erythritol + ATP = 4-CDP-2-C-methyl-D-erythritol 2-phosphate + ADP + H(+). It functions in the pathway isoprenoid biosynthesis; isopentenyl diphosphate biosynthesis via DXP pathway; isopentenyl diphosphate from 1-deoxy-D-xylulose 5-phosphate: step 3/6. Catalyzes the phosphorylation of the position 2 hydroxy group of 4-diphosphocytidyl-2C-methyl-D-erythritol. In Petrotoga mobilis (strain DSM 10674 / SJ95), this protein is 4-diphosphocytidyl-2-C-methyl-D-erythritol kinase.